The following is a 585-amino-acid chain: Auxin response factor 17 (585 aa).

Residues 119-221 (FAKILTPSDA…EMFIGVRRTP (103 aa)) constitute a DNA-binding region (TF-B3). Disordered stretches follow at residues 483-517 (EMMNFGSPPSDNLSPNSNTTNLSSGNDLVGNRGPL) and 535-585 (EHSE…SSQG). Over residues 488-510 (GSPPSDNLSPNSNTTNLSSGNDL) the composition is skewed to low complexity. The segment covering 573–585 (KHSNSNAGSSSQG) has biased composition (polar residues).

It belongs to the ARF family. As to quaternary structure, homo and heterodimers.

It localises to the nucleus. Functionally, auxin response factors (ARFs) are transcriptional factors that bind specifically to the DNA sequence 5'-TGTCTC-3' found in the auxin-responsive promoter elements (AuxREs). Could act as transcriptional activator or repressor. Formation of heterodimers with Aux/IAA proteins may alter their ability to modulate early auxin response genes expression. The sequence is that of Auxin response factor 17 (ARF17) from Arabidopsis thaliana (Mouse-ear cress).